We begin with the raw amino-acid sequence, 572 residues long: 2-isopropylmalate synthase (572 aa).

Residues 31–305 (PIWMSTDLRD…DPGLDFSNIN (275 aa)) form the Pyruvate carboxyltransferase domain. The Mg(2+) site is built by aspartate 40, histidine 244, histidine 246, and asparagine 280. Residues 437 to 572 (NTAPIHYVGH…MNDAAESVGV (136 aa)) form a regulatory domain region.

This sequence belongs to the alpha-IPM synthase/homocitrate synthase family. LeuA type 2 subfamily. As to quaternary structure, homodimer. Mg(2+) serves as cofactor.

The protein resides in the cytoplasm. The enzyme catalyses 3-methyl-2-oxobutanoate + acetyl-CoA + H2O = (2S)-2-isopropylmalate + CoA + H(+). It functions in the pathway amino-acid biosynthesis; L-leucine biosynthesis; L-leucine from 3-methyl-2-oxobutanoate: step 1/4. Its function is as follows. Catalyzes the condensation of the acetyl group of acetyl-CoA with 3-methyl-2-oxobutanoate (2-ketoisovalerate) to form 3-carboxy-3-hydroxy-4-methylpentanoate (2-isopropylmalate). This chain is 2-isopropylmalate synthase, found in Paraburkholderia phytofirmans (strain DSM 17436 / LMG 22146 / PsJN) (Burkholderia phytofirmans).